The following is a 342-amino-acid chain: Cell division protein FtsQ (342 aa).

The Cytoplasmic segment spans residues 1–80 (MDGAGSLTRS…ALVERYLPRR (80 aa)). The chain crosses the membrane as a helical span at residues 81 to 99 (VGISMTVLLLIGSCGFGIV). Over 100–342 (KGGHLQDFVT…KKKKKAGDAA (243 aa)) the chain is Periplasmic. The POTRA domain maps to 124-192 (FRITSVVING…GQLMIELTER (69 aa)).

The protein belongs to the FtsQ/DivIB family. FtsQ subfamily.

The protein localises to the cell inner membrane. Its function is as follows. Essential cell division protein. This chain is Cell division protein FtsQ, found in Bradyrhizobium diazoefficiens (strain JCM 10833 / BCRC 13528 / IAM 13628 / NBRC 14792 / USDA 110).